We begin with the raw amino-acid sequence, 63 residues long: Large ribosomal subunit protein bL28 (63 aa).

The protein belongs to the bacterial ribosomal protein bL28 family.

This Alkaliphilus metalliredigens (strain QYMF) protein is Large ribosomal subunit protein bL28.